Reading from the N-terminus, the 401-residue chain is Inactive (1R,4R,5S)-(-)-guaia-6,10(14)-diene synthase (401 aa).

Residues 1-20 (MVKFDSGSESEMTNGDELHI) are disordered. Mg(2+) contacts are provided by aspartate 134 and glutamate 139. The short motif at 134 to 138 (DDQFD) is the DDXXD motif element. Arginine 242 lines the substrate pocket. A Mg(2+)-binding site is contributed by serine 292. Substrate is bound at residue lysine 295. Aspartate 296 is a binding site for Mg(2+). A substrate-binding site is contributed by 375–376 (RY).

The protein belongs to the terpene synthase family. Mg(2+) is required as a cofactor.

This chain is Inactive (1R,4R,5S)-(-)-guaia-6,10(14)-diene synthase, found in Gibberella fujikuroi (strain CBS 195.34 / IMI 58289 / NRRL A-6831) (Bakanae and foot rot disease fungus).